The chain runs to 460 residues: Serine/threonine-protein kinase UL13 (460 aa).

A disordered region spans residues 1–37; the sequence is MATRGRPGAKQVADHSVSDGGEQRRIPQKPPGPERCD. Basic and acidic residues predominate over residues 12-25; the sequence is VADHSVSDGGEQRR. Positions 95–460 constitute a Protein kinase domain; the sequence is LEPYRFLGRG…DVRRTVSALA (366 aa). ATP contacts are provided by residues 101 to 109 and Lys120; that span reads LGRGGYGSV. Asp219 serves as the catalytic Proton acceptor.

Belongs to the protein kinase superfamily. Ser/Thr protein kinase family. Autophosphorylated.

The protein resides in the virion tegument. The protein localises to the host nucleus. The enzyme catalyses L-seryl-[protein] + ATP = O-phospho-L-seryl-[protein] + ADP + H(+). It carries out the reaction L-threonyl-[protein] + ATP = O-phospho-L-threonyl-[protein] + ADP + H(+). Multifunctional serine/threonine kinase that plays a role in several processes including egress of virus particles from the nucleus, modulation of the actin cytoskeleton and regulation of viral and cellular gene expression. Regulates the nuclear localization of viral envelopment factors UL34 and UL31 homologs, by phosphorylating the US3 kinase homolog, indicating a role in nuclear egress. Disrupts host nuclear lamins, including LMNA and LMNB1. Phosphorylates the viral Fc receptor composed of glycoproteins E (gE) and I (gI). Phosphorylation of glycoprotein E (gE) by UL13 homolog alters its subcellular localization, from the host early endosome to the plasma membrane. Participates in the transcriptional regulation of cellular and viral mRNAs mainly by phosphorylating the viral transcriptional regulator ICP22 homolog. The protein is Serine/threonine-protein kinase UL13 (UL13) of Amazona oratrix (yellow-headed parrot).